Reading from the N-terminus, the 668-residue chain is DNA ligase (668 aa).

Residues 37-41 (DAVYD), 86-87 (SM), and E116 contribute to the NAD(+) site. The N6-AMP-lysine intermediate role is filled by K118. The NAD(+) site is built by R139, E173, K288, and K312. Positions 406, 409, 424, and 429 each coordinate Zn(2+). Residues 590–668 (APDNFFKEKT…EQEAIAKIEK (79 aa)) form the BRCT domain.

It belongs to the NAD-dependent DNA ligase family. LigA subfamily. Requires Mg(2+) as cofactor. The cofactor is Mn(2+).

It catalyses the reaction NAD(+) + (deoxyribonucleotide)n-3'-hydroxyl + 5'-phospho-(deoxyribonucleotide)m = (deoxyribonucleotide)n+m + AMP + beta-nicotinamide D-nucleotide.. In terms of biological role, DNA ligase that catalyzes the formation of phosphodiester linkages between 5'-phosphoryl and 3'-hydroxyl groups in double-stranded DNA using NAD as a coenzyme and as the energy source for the reaction. It is essential for DNA replication and repair of damaged DNA. This chain is DNA ligase, found in Lactobacillus johnsonii (strain CNCM I-12250 / La1 / NCC 533).